We begin with the raw amino-acid sequence, 662 residues long: DNA ligase (662 aa).

NAD(+) is bound by residues 32 to 36 (DAEYD), 75 to 76 (SL), and E106. Residue K108 is the N6-AMP-lysine intermediate of the active site. NAD(+) is bound by residues R129, E164, K271, and K295. Positions 389, 392, 407, and 413 each coordinate Zn(2+). A BRCT domain is found at 580 to 662 (SSNSVLNNKI…HKVISLGVFK (83 aa)).

This sequence belongs to the NAD-dependent DNA ligase family. LigA subfamily. It depends on Mg(2+) as a cofactor. Mn(2+) is required as a cofactor.

The enzyme catalyses NAD(+) + (deoxyribonucleotide)n-3'-hydroxyl + 5'-phospho-(deoxyribonucleotide)m = (deoxyribonucleotide)n+m + AMP + beta-nicotinamide D-nucleotide.. In terms of biological role, DNA ligase that catalyzes the formation of phosphodiester linkages between 5'-phosphoryl and 3'-hydroxyl groups in double-stranded DNA using NAD as a coenzyme and as the energy source for the reaction. It is essential for DNA replication and repair of damaged DNA. The protein is DNA ligase of Wolbachia pipientis wMel.